The following is a 1362-amino-acid chain: Dicer-like protein 2-2 (1362 aa).

In terms of domain architecture, Helicase ATP-binding spans 30 to 197; sequence MLNESLKRNL…EIVESNLGSI (168 aa). An ATP-binding site is contributed by 43-50; it reads MPTGTGKT. The DEAH box signature appears at 139-142; sequence DEAH. Residues 343 to 505 enclose the Helicase C-terminal domain; sequence LLDELSKAYR…KLQNAERRQI (163 aa). Residues 536 to 630 enclose the Dicer dsRNA-binding fold domain; that stretch reads AVGYLYNFCS…VPTQVSDHLE (95 aa). RNase III domains follow at residues 889–1033 and 1075–1258; these read AQIL…TDGG and IVDM…IDSQ.

The protein belongs to the helicase family. Dicer subfamily.

Its function is as follows. Dicer-like endonuclease involved in cleaving double-stranded RNA in the RNA interference (RNAi) pathway. Produces 21 to 25 bp dsRNAs (siRNAs) which target the selective destruction of homologous RNAs leading to sequence-specific suppression of gene expression, called post-transcriptional gene silencing (PTGS). Part of a broad host defense response against viral infection and transposons. The sequence is that of Dicer-like protein 2-2 (dcl2-2) from Aspergillus niger (strain ATCC MYA-4892 / CBS 513.88 / FGSC A1513).